Here is a 201-residue protein sequence, read N- to C-terminus: Probable molybdenum cofactor guanylyltransferase (201 aa).

GTP contacts are provided by residues 20 to 22 (LAG), lysine 32, aspartate 77, and aspartate 106. Residue aspartate 106 coordinates Mg(2+).

Belongs to the MobA family. Mg(2+) is required as a cofactor.

It localises to the cytoplasm. It catalyses the reaction Mo-molybdopterin + GTP + H(+) = Mo-molybdopterin guanine dinucleotide + diphosphate. In terms of biological role, transfers a GMP moiety from GTP to Mo-molybdopterin (Mo-MPT) cofactor (Moco or molybdenum cofactor) to form Mo-molybdopterin guanine dinucleotide (Mo-MGD) cofactor. This Aquifex aeolicus (strain VF5) protein is Probable molybdenum cofactor guanylyltransferase.